Consider the following 395-residue polypeptide: S-adenosylmethionine synthase (395 aa).

Histidine 16 is an ATP binding site. Aspartate 18 serves as a coordination point for Mg(2+). Residue glutamate 44 coordinates K(+). Positions 57 and 100 each coordinate L-methionine. A flexible loop region spans residues 100–110 (QSPDIAQGVDD). Residues 174–176 (DAK), 241–242 (RF), aspartate 250, 256–257 (RK), alanine 273, and lysine 277 each bind ATP. L-methionine is bound at residue aspartate 250. Position 281 (lysine 281) interacts with L-methionine.

Belongs to the AdoMet synthase family. As to quaternary structure, homotetramer; dimer of dimers. Mg(2+) serves as cofactor. Requires K(+) as cofactor.

Its subcellular location is the cytoplasm. It carries out the reaction L-methionine + ATP + H2O = S-adenosyl-L-methionine + phosphate + diphosphate. Its pathway is amino-acid biosynthesis; S-adenosyl-L-methionine biosynthesis; S-adenosyl-L-methionine from L-methionine: step 1/1. Catalyzes the formation of S-adenosylmethionine (AdoMet) from methionine and ATP. The overall synthetic reaction is composed of two sequential steps, AdoMet formation and the subsequent tripolyphosphate hydrolysis which occurs prior to release of AdoMet from the enzyme. The polypeptide is S-adenosylmethionine synthase (Levilactobacillus brevis (strain ATCC 367 / BCRC 12310 / CIP 105137 / JCM 1170 / LMG 11437 / NCIMB 947 / NCTC 947) (Lactobacillus brevis)).